The primary structure comprises 265 residues: Protein N-terminal and lysine N-methyltransferase EFM7 (265 aa).

Residues 1-25 are disordered; sequence MSSDHEEDSLYGATELFGEPDGFYE. Residues W67, 93 to 95, D115, W152, and S176 each bind S-adenosyl-L-methionine; that span reads GAA.

The protein belongs to the class I-like SAM-binding methyltransferase superfamily. EFM7 family.

It localises to the cytoplasm. Functionally, S-adenosyl-L-methionine-dependent protein methyltransferase that trimethylates the N-terminal glycine 'Gly-2' of elongation factor 1-alpha, before also catalyzing the mono- and dimethylation of 'Lys-3'. The protein is Protein N-terminal and lysine N-methyltransferase EFM7 of Eremothecium gossypii (strain ATCC 10895 / CBS 109.51 / FGSC 9923 / NRRL Y-1056) (Yeast).